The primary structure comprises 595 residues: Grainyhead-like protein 3 homolog (595 aa).

The segment at 29-92 (DAWSKYLENP…CDQVKRSCSE (64 aa)) is transcription activation. The region spanning 221 to 454 (ANRDFEYTLE…DMETHPVLFI (234 aa)) is the Grh/CP2 DB domain. The interval 484 to 505 (SSQSFPKGLEAPPSKQQTSEDS) is disordered.

Belongs to the grh/CP2 family. Grainyhead subfamily.

It localises to the nucleus. Transcription factor playing important roles in primary neurulation and in the differentiation of stratified epithelia of both ectodermal and endodermal origin. Binds directly to the consensus DNA sequence 5'-AACCGGTT-3' acting as an activator and repressor on distinct target genes. The chain is Grainyhead-like protein 3 homolog (grhl3) from Xenopus laevis (African clawed frog).